The primary structure comprises 48 residues: uncharacterized protein (48 aa).

This is an uncharacterized protein from His1 virus (isolate Australia/Victoria) (His1V).